We begin with the raw amino-acid sequence, 47 residues long: Large ribosomal subunit protein bL34 (47 aa).

Belongs to the bacterial ribosomal protein bL34 family.

This is Large ribosomal subunit protein bL34 from Corynebacterium jeikeium (strain K411).